We begin with the raw amino-acid sequence, 272 residues long: Urease accessory protein UreD (272 aa).

The protein belongs to the UreD family. As to quaternary structure, ureD, UreF and UreG form a complex that acts as a GTP-hydrolysis-dependent molecular chaperone, activating the urease apoprotein by helping to assemble the nickel containing metallocenter of UreC. The UreE protein probably delivers the nickel.

It is found in the cytoplasm. Required for maturation of urease via the functional incorporation of the urease nickel metallocenter. This Opitutus terrae (strain DSM 11246 / JCM 15787 / PB90-1) protein is Urease accessory protein UreD.